Reading from the N-terminus, the 307-residue chain is tRNA-cytidine(32) 2-sulfurtransferase (307 aa).

The short motif at 44–49 (SGGKDS) is the PP-loop motif element. [4Fe-4S] cluster-binding residues include cysteine 119, cysteine 122, and cysteine 210.

It belongs to the TtcA family. As to quaternary structure, homodimer. Mg(2+) is required as a cofactor. It depends on [4Fe-4S] cluster as a cofactor.

It localises to the cytoplasm. The catalysed reaction is cytidine(32) in tRNA + S-sulfanyl-L-cysteinyl-[cysteine desulfurase] + AH2 + ATP = 2-thiocytidine(32) in tRNA + L-cysteinyl-[cysteine desulfurase] + A + AMP + diphosphate + H(+). Its pathway is tRNA modification. Functionally, catalyzes the ATP-dependent 2-thiolation of cytidine in position 32 of tRNA, to form 2-thiocytidine (s(2)C32). The sulfur atoms are provided by the cysteine/cysteine desulfurase (IscS) system. This is tRNA-cytidine(32) 2-sulfurtransferase from Aliivibrio salmonicida (strain LFI1238) (Vibrio salmonicida (strain LFI1238)).